The primary structure comprises 3102 residues: Laminin subunit alpha lam-3 (3102 aa).

Residues 1-16 (MRLWLGLLAVSNIALG) form the signal peptide. N19, N135, and N237 each carry an N-linked (GlcNAc...) asparagine glycan. Positions 44 to 295 (SERGLFPNIF…SISDISIGGQ (252 aa)) constitute a Laminin N-terminal domain. Intrachain disulfides connect C296–C305, C298–C316, C318–C327, C330–C350, C353–C362, C355–C387, C390–C399, C402–C420, C423–C435, C425–C451, C453–C462, C465–C475, C478–C491, C480–C496, C498–C507, and C510–C525. Laminin EGF-like domains follow at residues 296–352 (CICY…VCQQ), 353–422 (CQCF…ACRT), 423–477 (CECD…TCEP), and 478–527 (CPCN…GCQP). Residues 548-740 (INNIGWHLTD…QDTLMGGVEV (193 aa)) enclose the Laminin IV type A 1 domain. 31 cysteine pairs are disulfide-bonded: C774–C783, C776–C790, C793–C802, C805–C822, C825–C838, C827–C858, C861–C870, C873–C886, C889–C903, C891–C910, C913–C922, C925–C938, C941–C953, C943–C960, C962–C971, C974–C985, C988–C1000, C990–C1007, C1009–C1018, C1021–C1033, C1036–C1049, C1038–C1056, C1058–C1067, C1070–C1083, C1086–C1098, C1088–C1105, C1107–C1116, C1119–C1131, C1134–C1144, C1137–C1151, and C1153–C1162. Laminin EGF-like domains follow at residues 774-824 (CDCH…ACEQ), 825-888 (CECP…KCIE), 889-940 (CTCN…TCKP), 941-987 (CGCH…GCPA), 988-1035 (CDCN…GCQF), 1036-1085 (CHCN…GCED), 1086-1133 (CGCD…GCTE), 1134-1180 (CEPC…GCKL), 1181-1226 (CDCS…TCEP), and 1227-1283 (CGCN…GCTE). N796 carries N-linked (GlcNAc...) asparagine glycosylation. N991 carries N-linked (GlcNAc...) asparagine glycosylation. An N-linked (GlcNAc...) asparagine glycan is attached at N1027. N-linked (GlcNAc...) asparagine glycosylation is present at N1076. N1164 carries N-linked (GlcNAc...) asparagine glycosylation. 9 disulfides stabilise this stretch: C1165–C1178, C1181–C1193, C1183–C1200, C1202–C1211, C1214–C1224, C1227–C1246, C1229–C1252, C1254–C1263, and C1266–C1281. N-linked (GlcNAc...) asparagine glycosylation is present at N1288. A Laminin IV type A 2 domain is found at 1295-1496 (QSDLVWQQMY…STTKAIGVEK (202 aa)). 12 cysteine pairs are disulfide-bonded: C1540–C1549, C1542–C1556, C1559–C1568, C1571–C1587, C1590–C1603, C1592–C1614, C1617–C1626, C1629–C1644, C1647–C1659, C1649–C1666, C1668–C1677, and C1680–C1691. 3 consecutive Laminin EGF-like domains span residues 1540–1589 (CSCH…ACTK), 1590–1646 (CACP…TCSP), and 1647–1693 (CDCH…VCTS). Residues N1717, N1734, N1777, N1806, N1839, N1875, N1969, N1984, and N2048 are each glycosylated (N-linked (GlcNAc...) asparagine). Residues 2061 to 2084 (EAVSKMLGSEGSESGDANEESLRS) are disordered. N-linked (GlcNAc...) asparagine glycosylation is found at N2091, N2193, N2369, and N2479. Laminin G-like domains follow at residues 2467–2644 (SQRG…TDGC), 2652–2839 (DKII…IGMC), and 2913–3088 (RYGL…AKAC). Residues C2617 and C2644 are joined by a disulfide bond. Residues N2672 and N2686 are each glycosylated (N-linked (GlcNAc...) asparagine). The cysteines at positions 2814 and 2839 are disulfide-linked. N2932, N2959, and N3007 each carry an N-linked (GlcNAc...) asparagine glycan. An intrachain disulfide couples C3058 to C3088.

In terms of assembly, laminin is a complex glycoprotein, consisting of three different polypeptide chains (alpha, beta, gamma), which are bound to each other by disulfide bonds into a cross-shaped molecule comprising one long and three short arms with globules at each end.

It localises to the secreted. The protein resides in the extracellular space. It is found in the extracellular matrix. Its subcellular location is the basement membrane. Functionally, binding to cells via a high affinity receptor, laminin is thought to mediate the attachment, migration and organization of cells into tissues during embryonic development by interacting with other extracellular matrix components. Required to assemble a stable basement membrane and for organizing receptor complexes and cytoskeletal components to the proper cell surfaces. During embryogenesis, does not require the presence of collagen type IV in order to associate with cell surfaces, prior to assembly of the prototypical basement membrane. Plays an important role in muscle contraction of the body. Probably plays a distinct role from the related laminin subunit alpha epi-1. In Caenorhabditis elegans, this protein is Laminin subunit alpha lam-3.